The following is a 354-amino-acid chain: Guanine nucleotide-binding protein G(i) subunit alpha-1 (354 aa).

Gly2 carries the N-myristoyl glycine lipid modification. Cys3 carries the S-palmitoyl cysteine lipid modification. One can recognise a G-alpha domain in the interval 32–354 (REVKLLLLGA…KNNLKDCGLF (323 aa)). Positions 35 to 48 (KLLLLGAGESGKST) are G1 motif. GTP is bound by residues 43 to 48 (ESGKST), 150 to 151 (DS), and 175 to 178 (LRTR). Mg(2+) is bound at residue Ser47. The G2 motif stretch occupies residues 173–181 (DVLRTRVKT). Thr181 serves as a coordination point for Mg(2+). A G3 motif region spans residues 196-205 (FKMFDVGGQR). GTP-binding positions include 200-204 (DVGGQ), 269-272 (NKKD), and Ala326. Positions 265-272 (ILFLNKKD) are G4 motif. The G5 motif stretch occupies residues 324–329 (TCATDT).

It belongs to the G-alpha family. G(i/o/t/z) subfamily. Heterotrimeric G proteins are composed of 3 units; alpha, beta and gamma. The alpha chain contains the guanine nucleotide binding site. Part of a spindle orientation complex. Identified in complex with the beta subunit GNB1 and the gamma subunit GNG1. Identified in complex with the beta subunit GNB1 and the gamma subunit GNG2. GTP binding causes dissociation of the heterotrimer, liberating the individual subunits so that they can interact with downstream effector proteins. Myristoylation at Gly-2 is required for membrane anchoring before palmitoylation. In terms of processing, palmitoylation at Cys-3 varies with membrane lipid composition.

The protein resides in the nucleus. It is found in the cytoplasm. It localises to the cell membrane. The protein localises to the cytoskeleton. Its subcellular location is the microtubule organizing center. The protein resides in the centrosome. It is found in the cell cortex. It localises to the membrane. It catalyses the reaction GTP + H2O = GDP + phosphate + H(+). Functionally, guanine nucleotide-binding proteins (G proteins) function as transducers downstream of G protein-coupled receptors (GPCRs) in numerous signaling cascades. The alpha chain contains the guanine nucleotide binding site and alternates between an active, GTP-bound state and an inactive, GDP-bound state. Signaling by an activated GPCR promotes GDP release and GTP binding. The alpha subunit has a low GTPase activity that converts bound GTP to GDP, thereby terminating the signal. Both GDP release and GTP hydrolysis are modulated by numerous regulatory proteins. Signaling is mediated via effector proteins, such as adenylate cyclase. Inhibits adenylate cyclase activity of ADCY1, ADCY5 and ADCY6, leading to decreased intracellular cAMP levels. Required for cortical dynein-dynactin complex recruitment during metaphase. The chain is Guanine nucleotide-binding protein G(i) subunit alpha-1 (GNAI1) from Gallus gallus (Chicken).